The following is a 261-amino-acid chain: Kallikrein-1E2 (261 aa).

A signal peptide spans 1 to 17; it reads MWFLVLCLDLSLGETGA. The propeptide at 18 to 24 is activation peptide; that stretch reads LPPIQSR. The Peptidase S1 domain maps to 25-258; that stretch reads IIGGWECEKH…HLKWIKETIE (234 aa). 5 cysteine pairs are disulfide-bonded: C31/C173, C50/C66, C152/C219, C184/C198, and C209/C234. The Charge relay system role is filled by H65. An N-linked (GlcNAc...) asparagine glycan is attached at N79. D120 functions as the Charge relay system in the catalytic mechanism. S213 functions as the Charge relay system in the catalytic mechanism.

Belongs to the peptidase S1 family. Kallikrein subfamily. In terms of tissue distribution, detected in prostate and semen.

The protein resides in the secreted. The catalysed reaction is Preferential cleavage of Arg-|-Xaa bonds in small molecule substrates. Highly selective action to release kallidin (lysyl-bradykinin) from kininogen involves hydrolysis of Met-|-Xaa or Leu-|-Xaa.. Functionally, glandular kallikreins cleave Met-Lys and Arg-Ser bonds in kininogen to release Lys-bradykinin. In Equus caballus (Horse), this protein is Kallikrein-1E2 (KLK1E2).